A 271-amino-acid polypeptide reads, in one-letter code: 3-methyl-2-oxobutanoate hydroxymethyltransferase (271 aa).

Mg(2+) contacts are provided by Asp51 and Asp90. Residues 51-52 (DS), Asp90, and Lys119 each bind 3-methyl-2-oxobutanoate. Glu121 provides a ligand contact to Mg(2+). Residue Glu188 is the Proton acceptor of the active site.

The protein belongs to the PanB family. In terms of assembly, homodecamer; pentamer of dimers. It depends on Mg(2+) as a cofactor.

The protein resides in the cytoplasm. It catalyses the reaction 3-methyl-2-oxobutanoate + (6R)-5,10-methylene-5,6,7,8-tetrahydrofolate + H2O = 2-dehydropantoate + (6S)-5,6,7,8-tetrahydrofolate. Its pathway is cofactor biosynthesis; (R)-pantothenate biosynthesis; (R)-pantoate from 3-methyl-2-oxobutanoate: step 1/2. Catalyzes the reversible reaction in which hydroxymethyl group from 5,10-methylenetetrahydrofolate is transferred onto alpha-ketoisovalerate to form ketopantoate. The protein is 3-methyl-2-oxobutanoate hydroxymethyltransferase of Aromatoleum aromaticum (strain DSM 19018 / LMG 30748 / EbN1) (Azoarcus sp. (strain EbN1)).